Here is a 143-residue protein sequence, read N- to C-terminus: Small ribosomal subunit protein bS6 (143 aa).

A disordered region spans residues 100–143; sequence QSFIMKSKDDKGDKPERRRRDDDESGDVGVSNDSDNDGGNAEAA. The span at 105 to 121 shows a compositional bias: basic and acidic residues; it reads KSKDDKGDKPERRRRDD. A compositionally biased stretch (low complexity) spans 126–143; sequence DVGVSNDSDNDGGNAEAA.

The protein belongs to the bacterial ribosomal protein bS6 family.

Its function is as follows. Binds together with bS18 to 16S ribosomal RNA. This Xylella fastidiosa (strain M12) protein is Small ribosomal subunit protein bS6.